The sequence spans 845 residues: Ribonucleoside-diphosphate reductase subunit alpha (845 aa).

An ATP-cone domain is found at 1–98 (MHIIKRNGEP…LYRDDRTKKR (98 aa)). Residues Thr-303, 318–319 (SC), Gly-347, 534–538 (NLCTE), and 725–729 (PTSST) each bind substrate. Cysteines 319 and 574 form a disulfide. Asn-534 serves as the catalytic Proton acceptor. Cys-536 (cysteine radical intermediate) is an active-site residue. Catalysis depends on Glu-538, which acts as the Proton acceptor.

Belongs to the ribonucleoside diphosphate reductase large chain family. As to quaternary structure, tetramer of two alpha and two beta subunits.

The catalysed reaction is a 2'-deoxyribonucleoside 5'-diphosphate + [thioredoxin]-disulfide + H2O = a ribonucleoside 5'-diphosphate + [thioredoxin]-dithiol. Its activity is regulated as follows. Under complex allosteric control mediated by deoxynucleoside triphosphates and ATP binding. The type of nucleotide bound at the specificity site determines substrate preference. It seems probable that ATP makes the enzyme reduce CDP and UDP, dGTP favors ADP reduction and dTTP favors GDP reduction. Provides the precursors necessary for DNA synthesis. Catalyzes the biosynthesis of deoxyribonucleotides from the corresponding ribonucleotides. This chain is Ribonucleoside-diphosphate reductase subunit alpha (nrdA), found in Treponema pallidum (strain Nichols).